A 542-amino-acid chain; its full sequence is Chaperonin GroEL 1 (542 aa).

Residues 29 to 32 (TLGP), 86 to 90 (DGTTT), G413, 477 to 479 (NAA), and D493 each bind ATP.

Belongs to the chaperonin (HSP60) family. Forms a cylinder of 14 subunits composed of two heptameric rings stacked back-to-back. Interacts with the co-chaperonin GroES.

The protein resides in the cytoplasm. The catalysed reaction is ATP + H2O + a folded polypeptide = ADP + phosphate + an unfolded polypeptide.. Its function is as follows. Together with its co-chaperonin GroES, plays an essential role in assisting protein folding. The GroEL-GroES system forms a nano-cage that allows encapsulation of the non-native substrate proteins and provides a physical environment optimized to promote and accelerate protein folding. This Kineococcus radiotolerans (strain ATCC BAA-149 / DSM 14245 / SRS30216) protein is Chaperonin GroEL 1.